The following is a 683-amino-acid chain: U4/U6 small nuclear ribonucleoprotein Prp3 (683 aa).

Positions 1 to 87 constitute a PWI domain; the sequence is MALSKRELDE…HSKSSSDRSR (87 aa). Basic and acidic residues predominate over residues 73–107; that stretch reads GRSSRHSKSSSDRSRKRDLKEVFGDDSEISKESSG. The interval 73-135 is disordered; that stretch reads GRSSRHSKSS…IPGPPSESPG (63 aa). A Glycyl lysine isopeptide (Lys-Gly) (interchain with G-Cter in SUMO2) cross-link involves residue K139. Positions 153–183 are disordered; the sequence is IEERKKQLSFISPPTPQPKTPSSSQPERLPI. At S164 the chain carries Phosphoserine. Phosphothreonine is present on T167. Glycyl lysine isopeptide (Lys-Gly) (interchain with G-Cter in SUMO2) cross-links involve residues K244 and K252. The tract at residues 416 to 550 is mediates interaction with SART3; sequence NLVEHPAQLN…VHISVYRVRN (135 aa). At S619 the chain carries Phosphoserine.

In terms of assembly, component of the precatalytic spliceosome (spliceosome B complex). Component of the U4/U6-U5 tri-snRNP complex, a building block of the precatalytic spliceosome (spliceosome B complex). The U4/U6-U5 tri-snRNP complex is composed of the U4, U6 and U5 snRNAs and at least PRPF3, PRPF4, PRPF6, PRPF8, PRPF31, SNRNP200, TXNL4A, SNRNP40, SNRPB, SNRPD1, SNRPD2, SNRPD3, SNRPE, SNRPF, SNRPG, DDX23, CD2BP2, PPIH, SNU13, EFTUD2, SART1 and USP39, plus LSM2, LSM3, LSM4, LSM5, LSM6, LSM7 and LSM8. Interacts directly with PRPF4. Part of a heteromeric complex containing PPIH, PRPF3 and PRPF4 that is stable in the absence of RNA. Interacts with SART3; the interaction is direct and recruits the deubiquitinase USP4 to PRPF3. Interacts with PRPF19. Interacts ('Lys-63'-linked polyubiquitinated) with PRPF8 (via the MPN (JAB/Mov34) domain); may stabilize the U4/U6-U5 tri-snRNP complex. Interacts with ERCC6. In terms of processing, ubiquitinated. Undergoes 'Lys-63'-linked polyubiquitination by PRPF19 and deubiquitination by USP4. 'Lys-63'-linked ubiquitination increases the affinity for PRPF8 and may regulate the assembly of the U4/U6-U5 tri-snRNP complex.

It is found in the nucleus. The protein localises to the nucleus speckle. Functionally, plays a role in pre-mRNA splicing as component of the U4/U6-U5 tri-snRNP complex that is involved in spliceosome assembly, and as component of the precatalytic spliceosome (spliceosome B complex). This is U4/U6 small nuclear ribonucleoprotein Prp3 (PRPF3) from Bos taurus (Bovine).